The sequence spans 64 residues: uncharacterized protein (64 aa).

The segment at methionine 1–tyrosine 64 is disordered. The segment covering proline 8–asparagine 32 has biased composition (low complexity).

This is an uncharacterized protein from Dictyostelium discoideum (Social amoeba).